The following is a 65-amino-acid chain: Toxin Cbi1 (65 aa).

The region spanning 1-64 (KDGYPMDNKG…VWDRATNKCR (64 aa)) is the LCN-type CS-alpha/beta domain. 4 disulfide bridges follow: Cys11/Cys63, Cys15/Cys37, Cys22/Cys44, and Cys26/Cys46.

It belongs to the long (4 C-C) scorpion toxin superfamily. Sodium channel inhibitor family. Beta subfamily. As to expression, expressed by the venom gland.

It localises to the secreted. Functionally, beta toxins bind voltage-independently at site-4 of sodium channels (Nav) and shift the voltage of activation toward more negative potentials thereby affecting sodium channel activation and promoting spontaneous and repetitive firing. This is Toxin Cbi1 from Centruroides bicolor (Scorpion).